The following is a 469-amino-acid chain: MDITPFLDKKSKTPLYEQLYTFFKQEISHARITKGTRLPSKRRLSSLLDVSTATIERAYEQLTAEGYVKSKPKIGWFAAEVEPGFPTAPDHFQQSVQPGLHQKNAPAIDFHQGSVDPTLFPFNAWRKSIVKSLDRYSGSFHTSGDPQGEYELRHMIARFVRLSRGVNCEPGQIIIGAGTTVLLQNLCLSLKPGTKIGFEEPGFHRSRRMFEANHMDVTPICSDAEGVLPDELYRQNPYLMYTTPSHQFPIGTIMTITRRQELLAWAAETNSFIIEDDYDGEFRYSGHPIPSLQGLDPNGRVIYLGTFSKSLLPSLRLSFMIVPPELMEPIQNNVQLMKQTVSAHSQLALADFIETGEWQKHINRMRSLYRKKHAVLLEAIRSELGNTVEILGKNSGLHILLRLLFPASEEEAIQAAADHGVTLYPVSPSYIEQTPFTSVLIGYGGLSEEDIRLGIQKLKTAWAPLISSY.

In terms of domain architecture, HTH gntR-type spans 13-81; that stretch reads TPLYEQLYTF…PKIGWFAAEV (69 aa). The segment at residues 41-60 is a DNA-binding region (H-T-H motif); sequence KRRLSSLLDVSTATIERAYE. Position 309 is an N6-(pyridoxal phosphate)lysine (Lys-309).

The protein in the C-terminal section; belongs to the class-I pyridoxal-phosphate-dependent aminotransferase family. Pyridoxal 5'-phosphate serves as cofactor.

This is an uncharacterized protein from Bacillus subtilis (strain 168).